The sequence spans 98 residues: NADH-ubiquinone oxidoreductase chain 4L (98 aa).

3 helical membrane-spanning segments follow: residues 1 to 21 (MVLIKLNIIVAFMLALSGVLI), 36 to 56 (MMLSLFIFMAAMITHFHMFSI), and 61 to 81 (LILLVFSACEAGVGLALLVSI).

It belongs to the complex I subunit 4L family.

It localises to the mitochondrion membrane. The enzyme catalyses a ubiquinone + NADH + 5 H(+)(in) = a ubiquinol + NAD(+) + 4 H(+)(out). In terms of biological role, core subunit of the mitochondrial membrane respiratory chain NADH dehydrogenase (Complex I) which catalyzes electron transfer from NADH through the respiratory chain, using ubiquinone as an electron acceptor. Part of the enzyme membrane arm which is embedded in the lipid bilayer and involved in proton translocation. In Didelphis virginiana (North American opossum), this protein is NADH-ubiquinone oxidoreductase chain 4L (MT-ND4L).